The chain runs to 30 residues: Photosystem I reaction center subunit XII (30 aa).

Residues 6–26 form a helical membrane-spanning segment; that stretch reads VFTILAIALVPAVMAALLGSA.

The protein belongs to the PsaM family.

The protein resides in the cellular thylakoid membrane. The polypeptide is Photosystem I reaction center subunit XII (Synechococcus sp. (strain JA-3-3Ab) (Cyanobacteria bacterium Yellowstone A-Prime)).